The following is a 337-amino-acid chain: Anthranilate phosphoribosyltransferase (337 aa).

Residues glycine 81, 84–85 (GD), serine 89, 91–94 (NVST), 109–117 (KHGNRAATS), and alanine 121 each bind 5-phospho-alpha-D-ribose 1-diphosphate. Glycine 81 lines the anthranilate pocket. Residue serine 93 participates in Mg(2+) binding. An anthranilate-binding site is contributed by asparagine 112. Arginine 167 contributes to the anthranilate binding site. Positions 226 and 227 each coordinate Mg(2+).

The protein belongs to the anthranilate phosphoribosyltransferase family. Homodimer. Mg(2+) is required as a cofactor.

The enzyme catalyses N-(5-phospho-beta-D-ribosyl)anthranilate + diphosphate = 5-phospho-alpha-D-ribose 1-diphosphate + anthranilate. Its pathway is amino-acid biosynthesis; L-tryptophan biosynthesis; L-tryptophan from chorismate: step 2/5. In terms of biological role, catalyzes the transfer of the phosphoribosyl group of 5-phosphorylribose-1-pyrophosphate (PRPP) to anthranilate to yield N-(5'-phosphoribosyl)-anthranilate (PRA). This Methylorubrum extorquens (strain PA1) (Methylobacterium extorquens) protein is Anthranilate phosphoribosyltransferase.